The following is a 205-amino-acid chain: Ras-related protein rab-6.1 (205 aa).

Residues 18–25 (GEQSVGKT), threonine 43, 66–70 (DTAGQ), and 124–127 (NKTD) each bind GTP. 2 S-geranylgeranyl cysteine lipidation sites follow: cysteine 203 and cysteine 205. Residue cysteine 205 is modified to Cysteine methyl ester.

It belongs to the small GTPase superfamily. Rab family. As to quaternary structure, interacts with GARP complex component vps-52. Highly expressed in body wall muscle, intestine, somatic gonad, distal tip cells, vulva, and neurons including AVB, AVD, RIG, and PVC (at protein level). Not expressed in AVA and RMDV neurons.

The protein resides in the cell membrane. Its subcellular location is the cell projection. It localises to the dendrite. The protein localises to the perikaryon. It is found in the golgi apparatus. The protein resides in the cytoplasmic vesicle. Its subcellular location is the secretory vesicle. In terms of biological role, the small GTPases Rab are key regulators of intracellular membrane trafficking, from the formation of transport vesicles to their fusion with membranes. Rabs cycle between an inactive GDP-bound form and an active GTP-bound form that is able to recruit to membranes different set of downstream effectors directly responsible for vesicle formation, movement, tethering and fusion. In its active GTP-bound form, acts redundantly with rab-6.2 (in its active GTP-bound form) to positively regulate the retrograde trafficking of cargo molecules from endosomes to Golgi structures. Required for the retrograde trafficking of glr-1, a subunit of AMPA-type glutamate receptors (AMPRs), out of early endosomes and into the Golgi compartment in neurons. Together with rab-6.2, promotes the retrograde trafficking of mig-14 from endosomes to Golgi structures in the intestine. In oocytes, in its active GTP-bound form, involved in the membrane fusion and exocytosis of secretory vesicles (cortical granules) to play a role in the remodeling of the embryo surface following fertilization. Recruits sep-1 to cortical granules (derived from the Golgi complex) for exocytosis during the oocyte-to-embryo transition. Required for seam cell division and alae formation. Promotes spontaneous reversals in locomotion. The polypeptide is Ras-related protein rab-6.1 (Caenorhabditis elegans).